The sequence spans 223 residues: Uracil-DNA glycosylase (223 aa).

Asp67 (proton acceptor) is an active-site residue.

The protein belongs to the uracil-DNA glycosylase (UDG) superfamily. UNG family.

It localises to the cytoplasm. The catalysed reaction is Hydrolyzes single-stranded DNA or mismatched double-stranded DNA and polynucleotides, releasing free uracil.. Its function is as follows. Excises uracil residues from the DNA which can arise as a result of misincorporation of dUMP residues by DNA polymerase or due to deamination of cytosine. This Borrelia turicatae (strain 91E135) protein is Uracil-DNA glycosylase.